The primary structure comprises 197 residues: Peptidyl-tRNA hydrolase (197 aa).

Tyr-21 is a tRNA binding site. Catalysis depends on His-26, which acts as the Proton acceptor. Tyr-72, Asn-74, and Asn-120 together coordinate tRNA.

This sequence belongs to the PTH family. As to quaternary structure, monomer.

The protein resides in the cytoplasm. It carries out the reaction an N-acyl-L-alpha-aminoacyl-tRNA + H2O = an N-acyl-L-amino acid + a tRNA + H(+). Its function is as follows. Hydrolyzes ribosome-free peptidyl-tRNAs (with 1 or more amino acids incorporated), which drop off the ribosome during protein synthesis, or as a result of ribosome stalling. Catalyzes the release of premature peptidyl moieties from peptidyl-tRNA molecules trapped in stalled 50S ribosomal subunits, and thus maintains levels of free tRNAs and 50S ribosomes. This Alkalilimnicola ehrlichii (strain ATCC BAA-1101 / DSM 17681 / MLHE-1) protein is Peptidyl-tRNA hydrolase.